The sequence spans 739 residues: Adenosylcobalamin-dependent ribonucleoside-triphosphate reductase (739 aa).

Residues Cys-119 and Cys-419 are joined by a disulfide bond. The tract at residues 147–158 (SMPFSFLFDELM) is effector region-1. The interval 168 to 313 (ARSNISQIPR…ICNLIGKAVV (146 aa)) is effector region-2. Catalysis depends on residues Cys-408 and Glu-410. The interval 565–626 (FHYGAYLIQR…NPNFASAGTV (62 aa)) is adenosylcobalamin-binding-1. Residues 685 to 724 (LQQAPKEPIDKETYEKRSQEITGNVEEVFSQLNSDVKDLE) form an adenosylcobalamin-binding-2 region.

This sequence belongs to the class II ribonucleoside-triphosphate reductase family. Monomer. Adenosylcob(III)alamin serves as cofactor.

It carries out the reaction a 2'-deoxyribonucleoside 5'-triphosphate + [thioredoxin]-disulfide + H2O = a ribonucleoside 5'-triphosphate + [thioredoxin]-dithiol. Allosterically regulated by ATP and dNTP. The polypeptide is Adenosylcobalamin-dependent ribonucleoside-triphosphate reductase (rtpR) (Lactobacillus delbrueckii subsp. bulgaricus (strain ATCC 11842 / DSM 20081 / BCRC 10696 / JCM 1002 / NBRC 13953 / NCIMB 11778 / NCTC 12712 / WDCM 00102 / Lb 14)).